The primary structure comprises 77 residues: Translation initiation factor IF-1, chloroplastic (77 aa).

Residues 1 to 71 (MKEQKLIHEG…TRGRIIYRLR (71 aa)) form the S1-like domain.

This sequence belongs to the IF-1 family. In terms of assembly, component of the 30S ribosomal translation pre-initiation complex which assembles on the 30S ribosome in the order IF-2 and IF-3, IF-1 and N-formylmethionyl-tRNA(fMet); mRNA recruitment can occur at any time during PIC assembly.

The protein localises to the plastid. It localises to the chloroplast. Its function is as follows. One of the essential components for the initiation of protein synthesis. Stabilizes the binding of IF-2 and IF-3 on the 30S subunit to which N-formylmethionyl-tRNA(fMet) subsequently binds. Helps modulate mRNA selection, yielding the 30S pre-initiation complex (PIC). Upon addition of the 50S ribosomal subunit IF-1, IF-2 and IF-3 are released leaving the mature 70S translation initiation complex. The protein is Translation initiation factor IF-1, chloroplastic of Acorus calamus var. americanus (American sweet flag).